The sequence spans 83 residues: uncharacterized protein (83 aa).

This is an uncharacterized protein from Methanocaldococcus jannaschii (strain ATCC 43067 / DSM 2661 / JAL-1 / JCM 10045 / NBRC 100440) (Methanococcus jannaschii).